A 184-amino-acid polypeptide reads, in one-letter code: ATP synthase subunit b, chloroplastic (184 aa).

The helical transmembrane segment at 27–49 threads the bilayer; that stretch reads LATNLINLSVVLGVLIFFGKGVL.

Belongs to the ATPase B chain family. In terms of assembly, F-type ATPases have 2 components, F(1) - the catalytic core - and F(0) - the membrane proton channel. F(1) has five subunits: alpha(3), beta(3), gamma(1), delta(1), epsilon(1). F(0) has four main subunits: a(1), b(1), b'(1) and c(10-14). The alpha and beta chains form an alternating ring which encloses part of the gamma chain. F(1) is attached to F(0) by a central stalk formed by the gamma and epsilon chains, while a peripheral stalk is formed by the delta, b and b' chains.

Its subcellular location is the plastid. The protein resides in the chloroplast thylakoid membrane. Its function is as follows. F(1)F(0) ATP synthase produces ATP from ADP in the presence of a proton or sodium gradient. F-type ATPases consist of two structural domains, F(1) containing the extramembraneous catalytic core and F(0) containing the membrane proton channel, linked together by a central stalk and a peripheral stalk. During catalysis, ATP synthesis in the catalytic domain of F(1) is coupled via a rotary mechanism of the central stalk subunits to proton translocation. Component of the F(0) channel, it forms part of the peripheral stalk, linking F(1) to F(0). This is ATP synthase subunit b, chloroplastic from Helianthus annuus (Common sunflower).